Reading from the N-terminus, the 198-residue chain is Phosphoheptose isomerase (198 aa).

An SIS domain is found at Ile-34–Gly-196. Asn-49 to Gly-51 lines the substrate pocket. Zn(2+)-binding residues include His-58 and Asn-62. Residues Asn-62, Asn-91–Asp-92, Ser-117–Ser-119, Ser-122, and Gln-172 each bind substrate. 2 residues coordinate Zn(2+): Gln-172 and His-180.

This sequence belongs to the SIS family. GmhA subfamily. In terms of assembly, homotetramer. Requires Zn(2+) as cofactor.

The protein localises to the cytoplasm. It catalyses the reaction 2 D-sedoheptulose 7-phosphate = D-glycero-alpha-D-manno-heptose 7-phosphate + D-glycero-beta-D-manno-heptose 7-phosphate. The protein operates within carbohydrate biosynthesis; D-glycero-D-manno-heptose 7-phosphate biosynthesis; D-glycero-alpha-D-manno-heptose 7-phosphate and D-glycero-beta-D-manno-heptose 7-phosphate from sedoheptulose 7-phosphate: step 1/1. Catalyzes the isomerization of sedoheptulose 7-phosphate in D-glycero-D-manno-heptose 7-phosphate. The protein is Phosphoheptose isomerase of Alteromonas mediterranea (strain DSM 17117 / CIP 110805 / LMG 28347 / Deep ecotype).